We begin with the raw amino-acid sequence, 309 residues long: Small ribosomal subunit protein mS23 (309 aa).

This sequence belongs to the mitochondrion-specific ribosomal protein mS23 family. Component of the mitochondrial small ribosomal subunit.

It is found in the mitochondrion. The polypeptide is Small ribosomal subunit protein mS23 (RSM25) (Lodderomyces elongisporus (strain ATCC 11503 / CBS 2605 / JCM 1781 / NBRC 1676 / NRRL YB-4239) (Yeast)).